Consider the following 229-residue polypeptide: UPF0758 protein CLH_0547 (229 aa).

In terms of domain architecture, MPN spans 107 to 229; the sequence is KIMSPNDIAM…FISLKEKGFI (123 aa). Zn(2+) contacts are provided by His-178, His-180, and Asp-191. The JAMM motif signature appears at 178–191; the sequence is HNHPSGDPTPSKED.

This sequence belongs to the UPF0758 family.

The sequence is that of UPF0758 protein CLH_0547 from Clostridium botulinum (strain Alaska E43 / Type E3).